Consider the following 392-residue polypeptide: MPADHHAPDAALRLAQDLIRCPSVTPEDRGALDVVADALRPAGFAIERPVFAEPGYPDTPNLYARIGQNGPCLVFAGHTDVVPEGEGAWRHDPFAGAVADGMLYGRGAADMKGGVACMLAATLAFLDRRGADFGGSIAFLITGDEEGPAVNGTVKLLDWARRRGERFDHCVLGEPTNPGRLGEMIKIGRRGSLTGKLTVLGRQGHVAYPHKAENPIPGLLRLASALIAEPLDRGTAHFDASNLEFTTVDVGNPATNVIPSTARATFNVRFNDDWTAESLGAEIRRRLEQAAGNAVRFTLDLQPSNAPAFLTRPDAFVTLVAEAIRAETGLTPTLSTTGGTSDARFIKDACPVIEFGLVGETMHQVDECVAVADLERLTAIYGRVLDAYFPGS.

Residue His78 coordinates Zn(2+). Residue Asp80 is part of the active site. Asp110 provides a ligand contact to Zn(2+). Glu145 (proton acceptor) is an active-site residue. Zn(2+) is bound by residues Glu146, Glu174, and His363.

The protein belongs to the peptidase M20A family. DapE subfamily. Homodimer. The cofactor is Zn(2+). It depends on Co(2+) as a cofactor.

It catalyses the reaction N-succinyl-(2S,6S)-2,6-diaminopimelate + H2O = (2S,6S)-2,6-diaminopimelate + succinate. It participates in amino-acid biosynthesis; L-lysine biosynthesis via DAP pathway; LL-2,6-diaminopimelate from (S)-tetrahydrodipicolinate (succinylase route): step 3/3. Its function is as follows. Catalyzes the hydrolysis of N-succinyl-L,L-diaminopimelic acid (SDAP), forming succinate and LL-2,6-diaminopimelate (DAP), an intermediate involved in the bacterial biosynthesis of lysine and meso-diaminopimelic acid, an essential component of bacterial cell walls. The protein is Succinyl-diaminopimelate desuccinylase of Methylobacterium radiotolerans (strain ATCC 27329 / DSM 1819 / JCM 2831 / NBRC 15690 / NCIMB 10815 / 0-1).